A 481-amino-acid polypeptide reads, in one-letter code: Protein NRT1/ PTR FAMILY 1.3 (481 aa).

Helical transmembrane passes span 32–52, 57–77, 88–108, 124–144, 173–193, 202–222, 259–279, 302–322, 333–353, 374–394, 422–442, and 451–471; these read LAYF…YGMG, ANIL…GAFI, IGFG…TTII, LLKS…AGGV, FNWY…LLVF, IGFG…FAAS, IWST…FIVL, IFLV…IVPL, LGVM…ISAL, AMWL…NTIA, ASLI…GSWI, and LDYY…YFVW.

It belongs to the major facilitator superfamily. Proton-dependent oligopeptide transporter (POT/PTR) (TC 2.A.17) family. In terms of tissue distribution, expressed in roots.

The protein resides in the membrane. The chain is Protein NRT1/ PTR FAMILY 1.3 (NPF1.3) from Arabidopsis thaliana (Mouse-ear cress).